Consider the following 144-residue polypeptide: Putative pre-16S rRNA nuclease (144 aa).

This sequence belongs to the YqgF nuclease family.

The protein localises to the cytoplasm. In terms of biological role, could be a nuclease involved in processing of the 5'-end of pre-16S rRNA. The protein is Putative pre-16S rRNA nuclease of Blochmanniella pennsylvanica (strain BPEN).